Here is a 1307-residue protein sequence, read N- to C-terminus: Rab3 GTPase-activating protein regulatory subunit (1307 aa).

It belongs to the Rab3-GAP regulatory subunit family. In terms of assembly, the Rab3 GTPase-activating complex is a heterodimer composed of rbg-1 and rbg-2.

The protein resides in the cytoplasm. Probable regulatory subunit of a GTPase activating protein that has specificity for Rab3 subfamily. Rab3 proteins are involved in regulated exocytosis of neurotransmitters and hormones. Rab3 GTPase-activating complex specifically converts active Rab3-GTP to the inactive form Rab3-GDP. The chain is Rab3 GTPase-activating protein regulatory subunit (rbg-2) from Caenorhabditis elegans.